The following is a 175-amino-acid chain: Peptide deformylase (175 aa).

Residues Cys-96 and His-138 each contribute to the Fe cation site. Residue Glu-139 is part of the active site. Residue His-142 participates in Fe cation binding.

The protein belongs to the polypeptide deformylase family. The cofactor is Fe(2+).

The enzyme catalyses N-terminal N-formyl-L-methionyl-[peptide] + H2O = N-terminal L-methionyl-[peptide] + formate. Removes the formyl group from the N-terminal Met of newly synthesized proteins. Requires at least a dipeptide for an efficient rate of reaction. N-terminal L-methionine is a prerequisite for activity but the enzyme has broad specificity at other positions. The chain is Peptide deformylase from Helicobacter acinonychis (strain Sheeba).